The sequence spans 766 residues: Serine/threonine-protein kinase PKH1 (766 aa).

The interval 1 to 52 (MGNRSLTEADHALLSKPLVPTSAEHTQTQEYPRPFVDGSNSQSGSELQASPQ) is disordered. Residues 38 to 52 (GSNSQSGSELQASPQ) are compositionally biased toward polar residues. Positions 125-391 (FKFGEQLGDG…IKQIKAHLFF (267 aa)) constitute a Protein kinase domain. Residues 135–137 (SYS) and K154 each bind ATP. The segment at 156–201 (LSKEYLIRQKKVKYVTVEKLALQKLNGTKGIFKLFFTFQDEASLYF) is PIF-pocket. ATP-binding positions include 204–206 (EYA) and D210. D249 serves as the catalytic Proton acceptor. 2 residues coordinate ATP: E253 and D267. 2 positions are modified to phosphoserine: S294 and S296. Residues 476-495 (TSQPKLGSKSSTSVRSASNN) show a composition bias toward polar residues. Disordered stretches follow at residues 476-529 (TSQP…NRSR) and 725-745 (PEEGALHTKRPTSLQTRSSSN). A compositionally biased stretch (low complexity) spans 511–521 (SVSSPSISTTS). Positions 735–745 (PTSLQTRSSSN) are enriched in polar residues.

It belongs to the protein kinase superfamily. AGC Ser/Thr protein kinase family. PDPK1 subfamily.

It carries out the reaction L-seryl-[protein] + ATP = O-phospho-L-seryl-[protein] + ADP + H(+). The enzyme catalyses L-threonyl-[protein] + ATP = O-phospho-L-threonyl-[protein] + ADP + H(+). Activates YPK1 by phosphorylating of a threonine residue. This chain is Serine/threonine-protein kinase PKH1 (PKH1), found in Saccharomyces cerevisiae (strain ATCC 204508 / S288c) (Baker's yeast).